The following is a 303-amino-acid chain: tRNA dimethylallyltransferase (303 aa).

10–17 (GPTASGKS) is an ATP binding site. 12–17 (TASGKS) provides a ligand contact to substrate. Residues 35–38 (DSMQ) form an interaction with substrate tRNA region.

Belongs to the IPP transferase family. Monomer. Mg(2+) is required as a cofactor.

The enzyme catalyses adenosine(37) in tRNA + dimethylallyl diphosphate = N(6)-dimethylallyladenosine(37) in tRNA + diphosphate. Functionally, catalyzes the transfer of a dimethylallyl group onto the adenine at position 37 in tRNAs that read codons beginning with uridine, leading to the formation of N6-(dimethylallyl)adenosine (i(6)A). The sequence is that of tRNA dimethylallyltransferase from Methylobacterium nodulans (strain LMG 21967 / CNCM I-2342 / ORS 2060).